Here is a 221-residue protein sequence, read N- to C-terminus: PKHD-type hydroxylase P9303_20491 (221 aa).

The Fe2OG dioxygenase domain maps to 80 to 174 (HIHGVMFSRS…RLVCVGWIQS (95 aa)). 3 residues coordinate Fe cation: H98, D100, and H155. R165 is a binding site for 2-oxoglutarate.

Fe(2+) serves as cofactor. The cofactor is L-ascorbate.

The chain is PKHD-type hydroxylase P9303_20491 from Prochlorococcus marinus (strain MIT 9303).